Reading from the N-terminus, the 206-residue chain is MKHDIAAKLLQIGAVALQPNEPFTWSSGLKSPIYCDNRLTLAYPGVRRLIADALAELIRTHFPKADLIAGTAAGIPHAAWVSERLELPMCYVRSQAKRHGKGKQIEGQARPGQRVVVIEDLISTGGTSLAAVRALKEAGCEVLGVAAIFTYGLEKAKQAFAAENLPAYTLTDYNTLIETAVRLGAVSEHDLATLRQWRENPEEWGS.

5-phospho-alpha-D-ribose 1-diphosphate contacts are provided by residues Arg-93, Lys-97, His-99, and 119–127 (EDLISTGGT). Ser-123 provides a ligand contact to orotate.

It belongs to the purine/pyrimidine phosphoribosyltransferase family. PyrE subfamily. As to quaternary structure, homodimer. Mg(2+) is required as a cofactor.

The enzyme catalyses orotidine 5'-phosphate + diphosphate = orotate + 5-phospho-alpha-D-ribose 1-diphosphate. It participates in pyrimidine metabolism; UMP biosynthesis via de novo pathway; UMP from orotate: step 1/2. Functionally, catalyzes the transfer of a ribosyl phosphate group from 5-phosphoribose 1-diphosphate to orotate, leading to the formation of orotidine monophosphate (OMP). This is Orotate phosphoribosyltransferase from Bacillus caldolyticus.